The primary structure comprises 164 residues: Putative pre-16S rRNA nuclease (164 aa).

This sequence belongs to the YqgF nuclease family.

The protein resides in the cytoplasm. In terms of biological role, could be a nuclease involved in processing of the 5'-end of pre-16S rRNA. This chain is Putative pre-16S rRNA nuclease, found in Rhizobium johnstonii (strain DSM 114642 / LMG 32736 / 3841) (Rhizobium leguminosarum bv. viciae).